The following is a 322-amino-acid chain: Tetrahydromethanopterin S-methyltransferase subunit H (322 aa).

This sequence belongs to the MtrH family. The complex is composed of 8 subunits; MtrA, MtrB, MtrC, MtrD, MtrE, MtrF, MtrG and MtrH.

The catalysed reaction is 5-methyl-5,6,7,8-tetrahydromethanopterin + coenzyme M + 2 Na(+)(in) = 5,6,7,8-tetrahydromethanopterin + methyl-coenzyme M + 2 Na(+)(out). Its pathway is one-carbon metabolism; methanogenesis from CO(2); methyl-coenzyme M from 5,10-methylene-5,6,7,8-tetrahydromethanopterin: step 2/2. Functionally, part of a complex that catalyzes the formation of methyl-coenzyme M and tetrahydromethanopterin from coenzyme M and methyl-tetrahydromethanopterin. This is an energy-conserving, sodium-ion translocating step. MtrH catalyzes the transfer of the methyl group from methyl-tetrahydromethanopterin to the corrinoid prosthetic group of MtrA. This chain is Tetrahydromethanopterin S-methyltransferase subunit H, found in Methanopyrus kandleri (strain AV19 / DSM 6324 / JCM 9639 / NBRC 100938).